The primary structure comprises 447 residues: Na(+)-translocating NADH-quinone reductase subunit A (447 aa).

It belongs to the NqrA family. Composed of six subunits; NqrA, NqrB, NqrC, NqrD, NqrE and NqrF.

It catalyses the reaction a ubiquinone + n Na(+)(in) + NADH + H(+) = a ubiquinol + n Na(+)(out) + NAD(+). Its function is as follows. NQR complex catalyzes the reduction of ubiquinone-1 to ubiquinol by two successive reactions, coupled with the transport of Na(+) ions from the cytoplasm to the periplasm. NqrA to NqrE are probably involved in the second step, the conversion of ubisemiquinone to ubiquinol. This is Na(+)-translocating NADH-quinone reductase subunit A from Haemophilus influenzae (strain PittEE).